The sequence spans 1091 residues: Exonuclease/helicase subunit RexB (1091 aa).

Belongs to the helicase family. AddB/RexB type 2 subfamily. In terms of assembly, heterodimer of RexA (AddA) and RexB. Mg(2+) is required as a cofactor.

Involved in DNA double-strand break repair. Is not involved in recombination during natural competence or in plasmid establishment. In terms of biological role, the heterodimer acts as both an ATP-dependent DNA helicase and an ATP-dependent, dual-direction single-stranded exonuclease. Recognizes the chi site generating a DNA molecule suitable for the initiation of homologous recombination. This subunit has 5' -&gt; 3' nuclease activity but not helicase activity. The protein is Exonuclease/helicase subunit RexB of Streptococcus pneumoniae serotype 4 (strain ATCC BAA-334 / TIGR4).